The sequence spans 128 residues: Adrenodoxin homolog (128 aa).

In terms of domain architecture, 2Fe-2S ferredoxin-type spans E12–T115. [2Fe-2S] cluster-binding residues include C50, C56, C59, and C96.

It belongs to the adrenodoxin/putidaredoxin family. [2Fe-2S] cluster is required as a cofactor.

It is found in the mitosome. Functionally, ferredoxins are iron-sulfur proteins that transfer electrons in a wide variety of metabolic reactions. The protein is Adrenodoxin homolog of Encephalitozoon cuniculi (strain GB-M1) (Microsporidian parasite).